Reading from the N-terminus, the 318-residue chain is Transaldolase (318 aa).

The Schiff-base intermediate with substrate role is filled by lysine 132.

This sequence belongs to the transaldolase family. Type 1 subfamily. Homodimer.

The protein localises to the cytoplasm. The enzyme catalyses D-sedoheptulose 7-phosphate + D-glyceraldehyde 3-phosphate = D-erythrose 4-phosphate + beta-D-fructose 6-phosphate. It functions in the pathway carbohydrate degradation; pentose phosphate pathway; D-glyceraldehyde 3-phosphate and beta-D-fructose 6-phosphate from D-ribose 5-phosphate and D-xylulose 5-phosphate (non-oxidative stage): step 2/3. Transaldolase is important for the balance of metabolites in the pentose-phosphate pathway. In Allorhizobium ampelinum (strain ATCC BAA-846 / DSM 112012 / S4) (Agrobacterium vitis (strain S4)), this protein is Transaldolase.